Consider the following 156-residue polypeptide: SsrA-binding protein (156 aa).

This sequence belongs to the SmpB family.

It localises to the cytoplasm. In terms of biological role, required for rescue of stalled ribosomes mediated by trans-translation. Binds to transfer-messenger RNA (tmRNA), required for stable association of tmRNA with ribosomes. tmRNA and SmpB together mimic tRNA shape, replacing the anticodon stem-loop with SmpB. tmRNA is encoded by the ssrA gene; the 2 termini fold to resemble tRNA(Ala) and it encodes a 'tag peptide', a short internal open reading frame. During trans-translation Ala-aminoacylated tmRNA acts like a tRNA, entering the A-site of stalled ribosomes, displacing the stalled mRNA. The ribosome then switches to translate the ORF on the tmRNA; the nascent peptide is terminated with the 'tag peptide' encoded by the tmRNA and targeted for degradation. The ribosome is freed to recommence translation, which seems to be the essential function of trans-translation. The polypeptide is SsrA-binding protein (Clostridium perfringens (strain 13 / Type A)).